The sequence spans 220 residues: Zinc finger protein 36 (220 aa).

The C2H2-type 1 zinc finger occupies Phe-73–His-95. Residues Gly-90 to Pro-134 form a disordered region. Positions Ala-107–Ala-117 are enriched in low complexity. The segment at His-135 to His-157 adopts a C2H2-type 2 zinc-finger fold.

Probable transcription factor involved in abscisic acid (ABA) signaling. Required for the regulation of the cross-talk between NADPH oxidase, hydrogen peroxide and MAP kinase in ABA signaling. Regulates the expression of the NADPH oxidase genes RBOHB and RBOHE, and the MAPK genes MPK1, MPK4, MPK5, MPK7 and MPK14. Regulates ABA-induced hydrogen peroxide production and antioxidant defense. Required for tolerance to water stress and oxidative stress. The polypeptide is Zinc finger protein 36 (Oryza sativa subsp. japonica (Rice)).